Reading from the N-terminus, the 995-residue chain is uncharacterized protein (995 aa).

This is an uncharacterized protein from Caenorhabditis elegans.